The primary structure comprises 495 residues: Ectonucleoside triphosphate diphosphohydrolase 2 (495 aa).

Residues 2–4 (ARR) lie on the Cytoplasmic side of the membrane. A helical transmembrane segment spans residues 5 to 25 (AAAVLLLLALGCLLGILLLCL). Residues 26–465 (GSGDARGPPS…SHRSMLYNYW (440 aa)) are Extracellular-facing. Residue Asn-62 is glycosylated (N-linked (GlcNAc...) asparagine). Cys-73 and Cys-97 are disulfide-bonded. Residue Glu-162 is the Proton acceptor of the active site. 201-205 (GASTQ) serves as a coordination point for ATP. 4 disulfides stabilise this stretch: Cys-239-Cys-286, Cys-267-Cys-311, Cys-324-Cys-329, and Cys-378-Cys-400. N-linked (GlcNAc...) asparagine glycosylation occurs at Asn-297. N-linked (GlcNAc...) asparagine glycans are attached at residues Asn-418 and Asn-444. A helical membrane pass occupies residues 466–486 (VILILLFVITTLTALLTAVYL). The Cytoplasmic segment spans residues 487 to 495 (LRRSKSSTI).

The protein belongs to the GDA1/CD39 NTPase family. Ca(2+) serves as cofactor. It depends on Mg(2+) as a cofactor.

It is found in the membrane. In terms of biological role, in the nervous system, could hydrolyze ATP and other nucleotides to regulate purinergic neurotransmission. Hydrolyzes ADP only to a marginal extent. In Gallus gallus (Chicken), this protein is Ectonucleoside triphosphate diphosphohydrolase 2 (ENTPD2).